A 520-amino-acid polypeptide reads, in one-letter code: Dihydropyrimidinase 2 (520 aa).

Positions 59, 61, and 152 each coordinate Zn(2+). Lys-152 bears the N6-carboxylysine mark. Tyr-157 is a substrate binding site. His-185 and His-241 together coordinate Zn(2+). Ser-291 is a binding site for substrate. Asp-319 is a binding site for Zn(2+). Asn-340 contributes to the substrate binding site.

The protein belongs to the metallo-dependent hydrolases superfamily. Hydantoinase/dihydropyrimidinase family. As to quaternary structure, homotetramer. The cofactor is Zn(2+). Carboxylation allows a single lysine to coordinate two zinc ions. Body wall muscles.

The enzyme catalyses 5,6-dihydrouracil + H2O = 3-(carbamoylamino)propanoate + H(+). This chain is Dihydropyrimidinase 2 (dhp-2), found in Caenorhabditis elegans.